The sequence spans 265 residues: MQPDLHCRTLAAHTLKHFRALSPLTHCMTNDVVQTFTANTLLALGASPAMVIDPVEARPFAAIANALLINVGTLTASRADAMRAAVESAYDAKTPWTLDPVAVGVLEFRRRFCLDLLSLRPAAIRGNASEILALAGMALGGRGVDTTEAALAALPAAQALARQIDCIVVVTGEIDYVTNSQRTLSIPGGDPLMTRIVGTGCALSAVVAASCALPGAALDNVASACCWMKLAGQAAAERSEGPGSFIPAFLDALYHLDVEAANATN.

Met-50 contributes to the substrate binding site. ATP contacts are provided by Arg-125 and Thr-171. Gly-198 provides a ligand contact to substrate.

This sequence belongs to the Thz kinase family. It depends on Mg(2+) as a cofactor.

The enzyme catalyses 5-(2-hydroxyethyl)-4-methylthiazole + ATP = 4-methyl-5-(2-phosphooxyethyl)-thiazole + ADP + H(+). Its pathway is cofactor biosynthesis; thiamine diphosphate biosynthesis; 4-methyl-5-(2-phosphoethyl)-thiazole from 5-(2-hydroxyethyl)-4-methylthiazole: step 1/1. Its function is as follows. Catalyzes the phosphorylation of the hydroxyl group of 4-methyl-5-beta-hydroxyethylthiazole (THZ). The polypeptide is Hydroxyethylthiazole kinase (Salmonella paratyphi A (strain ATCC 9150 / SARB42)).